The sequence spans 154 residues: ATP synthase subunit b (154 aa).

The chain crosses the membrane as a helical span at residues 9–29; sequence AIAFVIFVWFCMKYVWPPLMA.

Belongs to the ATPase B chain family. As to quaternary structure, F-type ATPases have 2 components, F(1) - the catalytic core - and F(0) - the membrane proton channel. F(1) has five subunits: alpha(3), beta(3), gamma(1), delta(1), epsilon(1). F(0) has three main subunits: a(1), b(2) and c(10-14). The alpha and beta chains form an alternating ring which encloses part of the gamma chain. F(1) is attached to F(0) by a central stalk formed by the gamma and epsilon chains, while a peripheral stalk is formed by the delta and b chains.

The protein localises to the cell inner membrane. In terms of biological role, f(1)F(0) ATP synthase produces ATP from ADP in the presence of a proton or sodium gradient. F-type ATPases consist of two structural domains, F(1) containing the extramembraneous catalytic core and F(0) containing the membrane proton channel, linked together by a central stalk and a peripheral stalk. During catalysis, ATP synthesis in the catalytic domain of F(1) is coupled via a rotary mechanism of the central stalk subunits to proton translocation. Functionally, component of the F(0) channel, it forms part of the peripheral stalk, linking F(1) to F(0). In Klebsiella pneumoniae subsp. pneumoniae (strain ATCC 700721 / MGH 78578), this protein is ATP synthase subunit b.